Consider the following 94-residue polypeptide: Small ribosomal subunit protein uS19 (94 aa).

The protein belongs to the universal ribosomal protein uS19 family.

Its function is as follows. Protein S19 forms a complex with S13 that binds strongly to the 16S ribosomal RNA. The sequence is that of Small ribosomal subunit protein uS19 from Desulforudis audaxviator (strain MP104C).